Here is a 264-residue protein sequence, read N- to C-terminus: RNA-binding protein pos-1 (264 aa).

Residues 56–82 are disordered; it reads QDKETQNSASQPTSEQSLANRDPCTVP. Residues 61–74 show a composition bias toward polar residues; that stretch reads QNSASQPTSEQSLA. 2 consecutive C3H1-type zinc fingers follow at residues 98-126 and 141-169; these read AFKT…HGVH and KYKT…HKIV. Zn(2+) contacts are provided by C104, C113, C119, H123, C147, C156, C162, and H166.

Monomer.

It localises to the cytoplasm. RNA-binding protein that coordinates cell fate specification and differentiation during early embryogenesis. Binds to a consensus pos-1 recognition element (PRE) consisting of the sequence 5'-UA(U 2-3)RGD(N 1-3)G-3', where R is any purine, D is A, G, or U, and N is any base. The PRE motif is found within the 3' untranslated region of many maternal transcripts required for early development. Binds to the 3' untranslated region (UTR) of Notch receptor homolog glp-1, thereby repressing glp-1 translation in the posterior blastomeres in the embryo. Binding to glp-1 3' UTR excludes cell fate regulator gld-1 binding to an overlapping binding site in the glp-1 3' UTR. Binds to the neg-1 3'UTR thereby opposing neg-1 expression and cytoplasmic polyadenylation of the neg-1 mRNA poly(A) tail promoted by gld-2 and gld-3. By inhibiting the cytoplasmic lengthening of neg-1 mRNA, restricts the accumulation of neg-1 protein and promotes endo-mesoderm development in anterior blastomeres. Essential for germline specification. The protein is RNA-binding protein pos-1 of Caenorhabditis elegans.